The following is a 186-amino-acid chain: MSVADIRKGAEQKMQRSIDAFKNDLSKIRTGRAHTGLLDHIQCDYYGSPVPISQVANLTLIDARTIGVQPWEKKMVPVVEKAIRESDLGLNPATQGDVIRVPMPALTEERRRELTKVVKSEAETAKVAVRNLRRDANEQLKKLVKDKEISEDDERRAGDDVQKLTDRFVAEIDKLVVTKEAEIMTV.

This sequence belongs to the RRF family.

Its subcellular location is the cytoplasm. Functionally, responsible for the release of ribosomes from messenger RNA at the termination of protein biosynthesis. May increase the efficiency of translation by recycling ribosomes from one round of translation to another. This chain is Ribosome-recycling factor, found in Paraburkholderia xenovorans (strain LB400).